The following is a 289-amino-acid chain: GTPase Era (289 aa).

The Era-type G domain maps to 2-167 (KSGFVSLIGR…LREIAKLLPE (166 aa)). The interval 10–17 (GRTNAGKS) is G1. 10–17 (GRTNAGKS) provides a ligand contact to GTP. Positions 36-40 (NATRR) are G2. The interval 57 to 60 (DTPG) is G3. GTP is bound by residues 57-61 (DTPGL) and 116-119 (TKTD). Residues 116 to 119 (TKTD) form a G4 region. Residues 146-148 (VNI) form a G5 region. The KH type-2 domain occupies 186 to 274 (YRDFILESVY…HLNLQIFVKK (89 aa)).

This sequence belongs to the TRAFAC class TrmE-Era-EngA-EngB-Septin-like GTPase superfamily. Era GTPase family. Monomer.

It is found in the cytoplasm. The protein resides in the cell inner membrane. In terms of biological role, an essential GTPase that binds both GDP and GTP, with rapid nucleotide exchange. Plays a role in 16S rRNA processing and 30S ribosomal subunit biogenesis and possibly also in cell cycle regulation and energy metabolism. This chain is GTPase Era, found in Campylobacter hominis (strain ATCC BAA-381 / DSM 21671 / CCUG 45161 / LMG 19568 / NCTC 13146 / CH001A).